A 546-amino-acid chain; its full sequence is MTTEKRQILVTAALPYANGPIHLGHMVEHIQADIWVRFQRLKGNDCLFICGEDAHGTAIMITAQKQGLPPEALVAKMHKEHARDLGGFLIEYDNFYTTHSPENRELAELIYTRLKDKGDIFAKTISQAYDPVKEIFLPDRFIRGTCPRCGAKDQYGDVCEVCGATYSPTELIDPVSALSGAKPIEKNSEHFFFSLNRYTQLLKKWIDAGHLQPQVANKLKEWFSEDLKPWDISRDAPYFGFEIPHAANKYFYVWLDAPIGYMASLKNLSKQRPSVNFDAYWKEGSQTELYHFVGKDIVYFHALFWPAMLSGAGFRLPTAIYVHGYLTVNGQKMSKSRGTFITAHHYLDHLSPEYLRYYYAAKLSAQVEDIDLNLDDFIQRVNADLIGKYVNLASRCAGFITKNFGGKLANELPEPDLYESFLQTEQTITDYYESLNYSKAVRVIMSLADRANQYIDAKKPWALAKEINQEAQVQAVCTQGLNLFKILTTYLKPILPVTAKKVEQFLNCDELNFANLKTPLLDHSVNPFEPLMQRLLPETAAQLTHE.

Positions 15–25 (PYANGPIHLGH) match the 'HIGH' region motif. Residues Cys146, Cys149, Cys159, and Cys162 each coordinate Zn(2+). Positions 332 to 336 (KMSKS) match the 'KMSKS' region motif. Lys335 contacts ATP.

Belongs to the class-I aminoacyl-tRNA synthetase family. MetG type 1 subfamily. Monomer. The cofactor is Zn(2+).

Its subcellular location is the cytoplasm. The catalysed reaction is tRNA(Met) + L-methionine + ATP = L-methionyl-tRNA(Met) + AMP + diphosphate. In terms of biological role, is required not only for elongation of protein synthesis but also for the initiation of all mRNA translation through initiator tRNA(fMet) aminoacylation. In Coxiella burnetii (strain Dugway 5J108-111), this protein is Methionine--tRNA ligase.